A 357-amino-acid polypeptide reads, in one-letter code: S-adenosyl-L-methionine:benzoic acid/salicylic acid carboxyl methyltransferase 1 (357 aa).

Tyr18 lines the S-adenosyl-L-homocysteine pocket. Gln25 is a binding site for benzoate. Residues Cys59, Asn64, Asp96, Leu97, Ser135, and Phe136 each contribute to the S-adenosyl-L-homocysteine site. Position 157 (Trp157) interacts with benzoate. 4 residues coordinate Mg(2+): Asn168, Asp254, Phe256, and Asn257. Benzoate is bound at residue Gln260.

The protein belongs to the methyltransferase superfamily. Type-7 methyltransferase family. In terms of tissue distribution, predominantly expressed in petal limbs and tubes of corollas.

It catalyses the reaction benzoate + S-adenosyl-L-methionine = methyl benzoate + S-adenosyl-L-homocysteine. It carries out the reaction salicylate + S-adenosyl-L-methionine = methyl salicylate + S-adenosyl-L-homocysteine. It functions in the pathway aromatic compound metabolism. In terms of biological role, converts benzoic acid into the volatile ester methyl benzoates. This scent, mostly produced in a rhythmical, diurnal manner, attracts the pollinators. In Petunia hybrida (Petunia), this protein is S-adenosyl-L-methionine:benzoic acid/salicylic acid carboxyl methyltransferase 1.